The chain runs to 447 residues: MTQRKYFGTDGIRGRVGDSPITPEFMLHLGWAAGQAFKRAGQRNSVLIGKDTRLSGYMFESALEAGLAAAGVDVKLLGPMPTPAIAYLTRTFRASAGIVISASHNPHHDNGIKFFSSAGTKLDDALEAEIERWLDQPIEVCEPEELGKASRVDDAPGRYVEFCKSTVPNEFTLDGMHLVLDCAHGATYHVAPKVFRELGAKVTVIGAEPDGLNINLNVGSTHLGALKQAVAEKKADLGIAFDGDGDRVLMVDRDGSEVDGDELLYILASQRQAEGRLNGGVVGTLMTNLGVELALREIGVEFERAKVGDRYVMERLLANNWLIGGEGSGHMVIRDCTTTGDGIVSALQVLLAVRKSGKTMGELRAGMSKLPQKMINVRVAERFDPLGRADIVEAMARAEASLGDAGRILLRASGTEPLIRVMAEGQSADDITRVVEELALVVERSTP.

S103 serves as the catalytic Phosphoserine intermediate. The Mg(2+) site is built by S103, D242, D244, and D246. S103 is modified (phosphoserine).

It belongs to the phosphohexose mutase family. It depends on Mg(2+) as a cofactor. Post-translationally, activated by phosphorylation.

It catalyses the reaction alpha-D-glucosamine 1-phosphate = D-glucosamine 6-phosphate. Catalyzes the conversion of glucosamine-6-phosphate to glucosamine-1-phosphate. The sequence is that of Phosphoglucosamine mutase from Marinobacter nauticus (strain ATCC 700491 / DSM 11845 / VT8) (Marinobacter aquaeolei).